Reading from the N-terminus, the 965-residue chain is MSMLSMDGIVAGGGSSSGGGERSFVLEQKMFNTGPQNKALPTVQSSGSSSNHAPIVGESPLGTVSSTMATGDTGRVGNVTYMSSGMLGATQFMPQNSSHPSTSVMMQQVPPQNGGATRSSPTEMQQCMQAMSEDSIEMRDYNSGVHHMHPHQMQMQQQQQHHQQQYNMSYHNHQQQMQQMHYHQQQQQYQQQQAQHHQMYAPQIQQQQQQPQQQSQQQSAQQPQQSSAALQHVNESSNLSSAGSISDREPEQHGGTPQRPTAPQSSTATDKKTRKRRKAGPTEDQATPKQERKITEFMKVGGEVASGNSVARCLLTEYHQNQGSPKRQPAVQQNGSNSYDSQQQQPQMNQHEMQNSYWGVATPSLGVNNRGTPTPTQQQHYSSDSNSNSNQSPPGQGNQSGRMVRTIDEETQTDSSLSQANPQNADEVAKMNRIIEDHRRQIEELNSKNSLERRKNEASKETIKRLLIDKNQIERKALRDKTAADSPRIGCFKTTRTGDSFRDQWVDGWAFAEMDKKTEQINAERNEIASASALLKKRKPLGIGKEPKRPQAVNSQNDSNGMQPSTSSNTNGDDAIFRRPEEPKEIQYQEYIELDEIYKLRREHLRKEETDLSMEKERLEKEKQHHVRELKRASNESASQFNDHRLLHKRYLMLNLLGKGGFSEVWKAFDIEENRYVACKIHHVNKDWKEEKKANYVKHAMREKDIHKSLDHCRIVKQYDLLTIDNHSFCTVLEYVPGNDLDFYLKQNRSISEKEARSIIMQVVSALVYLNEKSTPIIHYDLKPANILLESGNTSGAIKITDFGLSKIMEGESDDHDLGIELTSQFAGTYWYLPPETFIVPPPKITCKVDVWSIGVIFYQCIYGKKPFGNDLTQQKILEYNTIINAREVSFPSKPQVSSAAQDFIRRCLQYRKEDRADVFELAKHELFRPRGAIRASVAGSLLLVIITLCQHSNRSEDRLCVSNV.

6 disordered regions span residues 1–22, 35–72, 95–120, 172–292, 320–402, and 538–576; these read MSMLSMDGIVAGGGSSSGGGER, PQNKALPTVQSSGSSSNHAPIVGESPLGTVSSTMATGD, QNSSHPSTSVMMQQVPPQNGGATRSS, NHQQ…KQER, QNQG…QSGR, and RKPLGIGKEPKRPQAVNSQNDSNGMQPSTSSNTNGDDAI. Residues 10–21 are compositionally biased toward gly residues; that stretch reads VAGGGSSSGGGE. Residues 42–52 are compositionally biased toward polar residues; it reads TVQSSGSSSNH. Residues 172 to 231 show a composition bias toward low complexity; the sequence is NHQQQMQQMHYHQQQQQYQQQQAQHHQMYAPQIQQQQQQPQQQSQQQSAQQPQQSSAALQ. Polar residues-rich tracts occupy residues 233 to 244 and 320 to 341; these read VNESSNLSSAGS and QNQGSPKRQPAVQQNGSNSYDS. Positions 342 to 355 are enriched in low complexity; that stretch reads QQQQPQMNQHEMQN. Positions 365-381 are enriched in polar residues; sequence LGVNNRGTPTPTQQQHY. Low complexity predominate over residues 382–401; sequence SSDSNSNSNQSPPGQGNQSG. The segment covering 552–572 has biased composition (polar residues); that stretch reads AVNSQNDSNGMQPSTSSNTNG. Ser-634 bears the Phosphoserine mark. One can recognise a Protein kinase domain in the interval 651-928; it reads YLMLNLLGKG…VFELAKHELF (278 aa). Residues 657-665 and Lys-680 each bind ATP; that span reads LGKGGFSEV. Asp-781 acts as the Proton acceptor in catalysis.

It belongs to the protein kinase superfamily. Ser/Thr protein kinase family. In terms of assembly, interacts with air-2. In terms of processing, autophosphorylates in vitro. Phosphorylation on Ser-634 by air-2 enhances catalytic activity.

The protein resides in the nucleus. The catalysed reaction is L-seryl-[protein] + ATP = O-phospho-L-seryl-[protein] + ADP + H(+). It catalyses the reaction L-threonyl-[protein] + ATP = O-phospho-L-threonyl-[protein] + ADP + H(+). Its function is as follows. Essential for appropriate transcription during embryonic development. May act during transcription elongation to activate the RNA polymerase II large subunit (ama-1) by phosphorylating the Ser-2 residues of the C-terminal domain 7-residue repeats. Does not phosphorylate histone H3. The protein is Serine/threonine-protein kinase tousled-like 1 (tlk-1) of Caenorhabditis elegans.